A 316-amino-acid chain; its full sequence is MLEEAYLDLAKTVLTTGHEKTDRTGTGTISLFGYQMRFNLQEGFPLLTTKKVPFGLIKSELLWFLRGDTNIRFLLQHHNHIWDEWAFQRYVDSPEYHGPDMTDFGRRSLVDADFNQRYQAEKKAFCDRIVTDQAFGDHFGDLGLVYGSQWRAWQGHQGETIDQLANVIETLRTHPDSRRMIVSAWNPADVPSMALPPCHTLFQFYVNDGKLSCQLYQRSADIFLGVPFNIASYALLTSLIAKEVGLEVGDFVHTLGDAHIYSNHVEQIKTQLARTPHAAPQLWLNPDKSSIFDYEMSDIKVTGYDPEPAIKAPVAV.

DUMP is bound by residues R23 and R178–R179. The active-site Nucleophile is C198. DUMP contacts are provided by residues R218 to D221, N229, and H259 to Y261. Residue D221 participates in (6R)-5,10-methylene-5,6,7,8-tetrahydrofolate binding. Residue A315 participates in (6R)-5,10-methylene-5,6,7,8-tetrahydrofolate binding.

It belongs to the thymidylate synthase family. Bacterial-type ThyA subfamily. As to quaternary structure, homodimer.

It localises to the cytoplasm. It catalyses the reaction dUMP + (6R)-5,10-methylene-5,6,7,8-tetrahydrofolate = 7,8-dihydrofolate + dTMP. It functions in the pathway pyrimidine metabolism; dTTP biosynthesis. In terms of biological role, catalyzes the reductive methylation of 2'-deoxyuridine-5'-monophosphate (dUMP) to 2'-deoxythymidine-5'-monophosphate (dTMP) while utilizing 5,10-methylenetetrahydrofolate (mTHF) as the methyl donor and reductant in the reaction, yielding dihydrofolate (DHF) as a by-product. This enzymatic reaction provides an intracellular de novo source of dTMP, an essential precursor for DNA biosynthesis. The sequence is that of Thymidylate synthase from Levilactobacillus brevis (strain ATCC 367 / BCRC 12310 / CIP 105137 / JCM 1170 / LMG 11437 / NCIMB 947 / NCTC 947) (Lactobacillus brevis).